The sequence spans 591 residues: Metalloendopeptidase OPG085 (591 aa).

Histidine 41 provides a ligand contact to Zn(2+). Glutamate 44 is an active-site residue. Zn(2+)-binding residues include histidine 45 and glutamate 112.

The protein belongs to the peptidase M44 family. Requires Zn(2+) as cofactor. Post-translationally, undergoes proteolytic processing during the course of infection. May be cleaved into 46 kDa and 22 kDa products (Potential).

The protein localises to the virion. Probably involved in maturation of some viral proteins by processing them preferentially at Ala-Gly-|-Ser/Thr/Lys motifs. Does not seem to be responsible for the cleavage of major core proteins. This Homo sapiens (Human) protein is Metalloendopeptidase OPG085 (OPG085).